The following is a 53-amino-acid chain: uncharacterized protein (53 aa).

2 helical membrane passes run 3–22 (LFGMIFLIATVAFILLGVLL) and 26–45 (AFFFVSILTLIAAIVLFTVL).

The protein localises to the cell membrane. This is an uncharacterized protein from Bacillus subtilis (strain 168).